The sequence spans 165 residues: Ribosome maturation factor RimM (165 aa).

The 72-residue stretch at 94–165 (EDEFYIADLN…YVVLNYQREI (72 aa)) folds into the PRC barrel domain.

Belongs to the RimM family. As to quaternary structure, binds ribosomal protein uS19.

The protein localises to the cytoplasm. Its function is as follows. An accessory protein needed during the final step in the assembly of 30S ribosomal subunit, possibly for assembly of the head region. Essential for efficient processing of 16S rRNA. May be needed both before and after RbfA during the maturation of 16S rRNA. It has affinity for free ribosomal 30S subunits but not for 70S ribosomes. In Rickettsia felis (strain ATCC VR-1525 / URRWXCal2) (Rickettsia azadi), this protein is Ribosome maturation factor RimM.